We begin with the raw amino-acid sequence, 139 residues long: Large-conductance mechanosensitive channel (139 aa).

The next 2 membrane-spanning stretches (helical) occupy residues 16 to 36 and 83 to 103; these read VIDL…VDSL and GQFI…FVAV.

This sequence belongs to the MscL family. In terms of assembly, homopentamer.

It localises to the cell inner membrane. Functionally, channel that opens in response to stretch forces in the membrane lipid bilayer. May participate in the regulation of osmotic pressure changes within the cell. The chain is Large-conductance mechanosensitive channel from Aromatoleum aromaticum (strain DSM 19018 / LMG 30748 / EbN1) (Azoarcus sp. (strain EbN1)).